Reading from the N-terminus, the 704-residue chain is Neutral ceramidase (704 aa).

The N-terminal stretch at Met1–Ala23 is a signal peptide. N-linked (GlcNAc...) asparagine glycosylation is present at Asn230. Ser276 functions as the Nucleophile in the catalytic mechanism. Residues Asn362, Asn550, and Asn598 are each glycosylated (N-linked (GlcNAc...) asparagine).

It belongs to the neutral ceramidase family. N-glycosylated. Widely expressed in different tissues but enriched in neurons at all stages of development.

The protein localises to the secreted. The catalysed reaction is an N-acylsphing-4-enine + H2O = sphing-4-enine + a fatty acid. Hydrolyzes the sphingolipid ceramide into sphingosine and free fatty acid at an optimal pH of 6.5-7.5. Acts as a key regulator of sphingolipid signaling metabolites by generating sphingosine at the cell surface. Regulates synaptic vesicle exocytosis and trafficking by controlling presynaptic terminal sphingolipid composition. In Drosophila melanogaster (Fruit fly), this protein is Neutral ceramidase (CDase).